The sequence spans 438 residues: MQSVDTTKYIIYADITADGIVERPDVVGAIFGQTEGLLGSDLDLRDLQKTGRLGRIDVQISSSGGKSMGTISIPSSFDKVETAILAAALETIDRVGPCMARIHVTKIEDVRAAKRKYIIDRAKRILVEMFDENLLETEQITEEIKQSVRVEEITYIGKDNLPAGPNVLDSDAILVVEGRADVLNLLKYGIKNAVAVGGTNIPPTITELCSKKIATAFTDGDRGGELIVKELLQVADIDYVARAPEGKCVEELTQKEIIRALRQKIPVEQVMDMYKIKPFTRKKREIVTKRKSLIRERPVSVRTVAQVVPIAHHAEIAPPHEIQTRVHQKEVHEHYEEPEIEGQEPEEWFKHHVEELDGTLTARLFDRNNNPIRDVAVRDLARELKESNGSVHGVIFDGVITQRLLDIAAEKGLDYLIGAKMGSIAKTPVGIKVITSGQ.

In terms of domain architecture, Toprim spans 171-245; the sequence is DAILVVEGRA…DIDYVARAPE (75 aa). Residues glutamate 177, aspartate 219, and aspartate 221 each coordinate Mg(2+).

This sequence belongs to the archaeal DnaG primase family. As to quaternary structure, forms a ternary complex with MCM helicase and DNA. Component of the archaeal exosome complex. It depends on Mg(2+) as a cofactor.

The enzyme catalyses ssDNA + n NTP = ssDNA/pppN(pN)n-1 hybrid + (n-1) diphosphate.. Functionally, RNA polymerase that catalyzes the synthesis of short RNA molecules used as primers for DNA polymerase during DNA replication. Also part of the exosome, which is a complex involved in RNA degradation. Acts as a poly(A)-binding protein that enhances the interaction between heteromeric, adenine-rich transcripts and the exosome. The protein is DNA primase DnaG of Methanothrix thermoacetophila (strain DSM 6194 / JCM 14653 / NBRC 101360 / PT) (Methanosaeta thermophila).